A 365-amino-acid polypeptide reads, in one-letter code: Aminomethyltransferase (365 aa).

This sequence belongs to the GcvT family. The glycine cleavage system is composed of four proteins: P, T, L and H.

It catalyses the reaction N(6)-[(R)-S(8)-aminomethyldihydrolipoyl]-L-lysyl-[protein] + (6S)-5,6,7,8-tetrahydrofolate = N(6)-[(R)-dihydrolipoyl]-L-lysyl-[protein] + (6R)-5,10-methylene-5,6,7,8-tetrahydrofolate + NH4(+). In terms of biological role, the glycine cleavage system catalyzes the degradation of glycine. The protein is Aminomethyltransferase of Parafrankia sp. (strain EAN1pec).